The sequence spans 165 residues: LIM domain transcription factor LMO4 (165 aa).

LIM zinc-binding domains lie at 23 to 83 and 87 to 147; these read CAGC…LFGN and CSAC…ALIN.

In terms of assembly, interacts strongly with LDBS. Interacts with LDB2 and LDB1. Interaction with complexes consisting of at least LDB1 and LHX3 acts to disassemble the complex; may preferentially disassemble LDB1-LHX3 complexes rather than complexes consisting of LDB1, LHX3 and ISL1. Interacts (via the LIM zinc-binding domain 1) with RBBP8. Interacts with both RPPB8 and LDB1 through the same face and cannot bind to both proteins simultaneously. Interacts with BRCA1 (via the BRCT domains); the interaction represses BRCA1 transcriptional activity. Interacts with DEAF1; LMO4 blocks export from nucleus.

Functionally, transcription cofactor. Plays a role in establishing motor neuron identity, in concert with MNX1, acting, at least in part, to disrupt LDB1-LHX3 complexes thereby negatively modulating interneuron genes in motor neurons. This Bos taurus (Bovine) protein is LIM domain transcription factor LMO4 (LMO4).